Reading from the N-terminus, the 398-residue chain is Argininosuccinate synthase (398 aa).

9–17 provides a ligand contact to ATP; sequence AYSGGLDTS. L-citrulline-binding residues include tyrosine 87 and serine 92. Residue glycine 117 participates in ATP binding. Residues threonine 119, asparagine 123, and aspartate 124 each contribute to the L-aspartate site. Asparagine 123 is an L-citrulline binding site. Arginine 127, serine 176, serine 185, glutamate 261, and tyrosine 273 together coordinate L-citrulline.

It belongs to the argininosuccinate synthase family. Type 1 subfamily. Homotetramer.

It localises to the cytoplasm. It carries out the reaction L-citrulline + L-aspartate + ATP = 2-(N(omega)-L-arginino)succinate + AMP + diphosphate + H(+). The protein operates within amino-acid biosynthesis; L-arginine biosynthesis; L-arginine from L-ornithine and carbamoyl phosphate: step 2/3. The chain is Argininosuccinate synthase from Clostridium tetani (strain Massachusetts / E88).